The primary structure comprises 125 residues: Translation initiation factor 5A (125 aa).

Lys35 bears the Hypusine mark.

The protein belongs to the eIF-5A family.

The protein resides in the cytoplasm. Its function is as follows. Functions by promoting the formation of the first peptide bond. In Methanoregula boonei (strain DSM 21154 / JCM 14090 / 6A8), this protein is Translation initiation factor 5A (eIF5A).